The following is a 159-amino-acid chain: Abscisic acid and environmental stress-inducible protein (159 aa).

Repeat copies occupy residues 38-49, 50-61, 63-74, 77-88, 91-102, and 105-116. The segment at 38–135 is 7 X 12 AA repeats of G-G-G-Y-N-H-G-G-G-Y-N; it reads GGGYNHGGGG…GYNHGGGGCQ (98 aa). A 7; approximate repeat occupies 124–135; that stretch reads GGGYNHGGGGCQ.

Belongs to the GRP family.

The protein is Abscisic acid and environmental stress-inducible protein of Medicago sativa subsp. falcata (Sickle medic).